A 406-amino-acid polypeptide reads, in one-letter code: LIM/homeobox protein Lhx1 (406 aa).

LIM zinc-binding domains lie at 4–54 (CAGC…CKND) and 63–117 (CAGC…CKED). The segment covering 125 to 136 (AKENSLHSATTG) has biased composition (polar residues). 2 disordered regions span residues 125-187 (AKEN…RTTI) and 296-372 (FPQG…SAEV). Over residues 137-148 (SDPSLSPDSQDP) the composition is skewed to low complexity. Over residues 151 to 167 (DDAKDSESANVSDKETG) the composition is skewed to basic and acidic residues. Positions 180–239 (RRGPRTTIKAKQLETLKAAFAATPKPTRHIREQLAQETGLNMRVIQVWFQNRRSKERRMK) form a DNA-binding region, homeobox.

It is found in the nucleus. In terms of biological role, transcriptional factor that defines subclasses of motoneurons that segregate into columns in the spinal cord and select distinct axon pathways. Acts in conjunction with ISL-2. The chain is LIM/homeobox protein Lhx1 (LHX1) from Gallus gallus (Chicken).